Consider the following 487-residue polypeptide: N-succinylglutamate 5-semialdehyde dehydrogenase (487 aa).

An NAD(+)-binding site is contributed by 221–226 (GSSRTG). Residues E244 and C278 contribute to the active site.

This sequence belongs to the aldehyde dehydrogenase family. AstD subfamily.

The enzyme catalyses N-succinyl-L-glutamate 5-semialdehyde + NAD(+) + H2O = N-succinyl-L-glutamate + NADH + 2 H(+). It functions in the pathway amino-acid degradation; L-arginine degradation via AST pathway; L-glutamate and succinate from L-arginine: step 4/5. In terms of biological role, catalyzes the NAD-dependent reduction of succinylglutamate semialdehyde into succinylglutamate. The chain is N-succinylglutamate 5-semialdehyde dehydrogenase from Pseudomonas entomophila (strain L48).